The sequence spans 74 residues: Putative defensin-like protein 128 (74 aa).

The first 24 residues, 1-24 (MSKLTNVVIFIVFFLGMMAKETQG), serve as a signal peptide directing secretion. 4 disulfide bridges follow: Cys28–Cys72, Cys37–Cys56, Cys42–Cys66, and Cys46–Cys68.

This sequence belongs to the DEFL family.

It is found in the secreted. The protein is Putative defensin-like protein 128 (LCR8) of Arabidopsis thaliana (Mouse-ear cress).